The chain runs to 172 residues: VQ motif-containing protein 17 (172 aa).

The VQ motif lies at 51–60 (FREIVQNLTG). Positions 60–97 (GKQDHHHHDLPHQKGLKRNPRSRRSHDHHEVHDMNKSH) are disordered. Over residues 61–71 (KQDHHHHDLPH) the composition is skewed to basic and acidic residues. Over residues 72 to 85 (QKGLKRNPRSRRSH) the composition is skewed to basic residues. Positions 86–95 (DHHEVHDMNK) are enriched in basic and acidic residues.

It is found in the nucleus. May function as positive regulator of plant growth. The sequence is that of VQ motif-containing protein 17 from Arabidopsis thaliana (Mouse-ear cress).